A 276-amino-acid polypeptide reads, in one-letter code: 2-dehydro-3-deoxyphosphooctonate aldolase (276 aa).

It belongs to the KdsA family.

The protein resides in the cytoplasm. The catalysed reaction is D-arabinose 5-phosphate + phosphoenolpyruvate + H2O = 3-deoxy-alpha-D-manno-2-octulosonate-8-phosphate + phosphate. It participates in carbohydrate biosynthesis; 3-deoxy-D-manno-octulosonate biosynthesis; 3-deoxy-D-manno-octulosonate from D-ribulose 5-phosphate: step 2/3. It functions in the pathway bacterial outer membrane biogenesis; lipopolysaccharide biosynthesis. The chain is 2-dehydro-3-deoxyphosphooctonate aldolase from Xanthomonas euvesicatoria pv. vesicatoria (strain 85-10) (Xanthomonas campestris pv. vesicatoria).